The primary structure comprises 458 residues: Retinoic acid receptor RXR-beta (458 aa).

Positions 1–17 (GEAGRDGMGDTGRDSRS) are enriched in basic and acidic residues. Residues 1–105 (GEAGRDGMGD…GGSGPPEDVK (105 aa)) form a disordered region. The tract at residues 1-129 (GEAGRDGMGD…PGGPGAGKRL (129 aa)) is modulating. Low complexity predominate over residues 18–31 (PDSSSPNPLSQGIP). Residues 32–56 (PSSPPGPPHTPSAPPPPMPPPPLGS) are compositionally biased toward pro residues. The segment covering 57-68 (PFPVISSSMGSP) has biased composition (low complexity). Over residues 69–78 (GLPPPAPPGF) the composition is skewed to pro residues. 2 NR C4-type zinc fingers span residues 130 to 150 (CAIC…CEGC) and 166 to 190 (CRDN…YQKC). Residues 130–195 (CAICGDRSSG…RYQKCLATGM (66 aa)) constitute a DNA-binding region (nuclear receptor). The interval 196–220 (KREAVQEERQRGKDKDGDGDGAGGA) is hinge. The span at 201-213 (QEERQRGKDKDGD) shows a compositional bias: basic and acidic residues. 2 disordered regions span residues 201 to 223 (QEER…APEE) and 238 to 261 (QKSD…NDPV). Positions 221–454 (PEEMPVDRIL…TFLMEMLEAP (234 aa)) constitute an NR LBD domain. The span at 245–255 (EGPGATGGGGS) shows a compositional bias: gly residues.

The protein belongs to the nuclear hormone receptor family. NR2 subfamily. As to quaternary structure, homodimer (in vitro). Heterodimer with other retinoic acid receptor family members. Binds DNA preferentially as a RAR/RXR heterodimer. Interacts with NR1H3. Interacts with AKAP13. Expressed in the adrenal gland with main expression in the zona fasciculata (at protein level).

The protein resides in the nucleus. It is found in the cytoplasm. In terms of biological role, receptor for retinoic acid. Retinoic acid receptors bind as heterodimers to their target response elements in response to their ligands, all-trans or 9-cis retinoic acid, and regulate gene expression in various biological processes. The RAR/RXR heterodimers bind to the retinoic acid response elements (RARE). The polypeptide is Retinoic acid receptor RXR-beta (Rxrb) (Rattus norvegicus (Rat)).